The primary structure comprises 272 residues: MTFTEQLAAAWQRNDSLLCVGLDPDPHKLPLSLTGAGGAIFSFCREIVDATADLVCAFKPQIAYFHSQRAEDQLEQLIHYIHDAHPGIPVILDAKRGDIGSTAEHYALEAFERYKADAVTVSPYMGFDSMQPYLAYPERGVIVLCRTSNPGGSDVQFLQVDGKPLYQLVAEAARERWNTTGQMGLVVGATFPNEIARVRQIVGDMPLLIPGIGAQGGDIEATVKAGRTADGTGMMINSSRAILYASREKDFAAAARNVALQTRETINRYRHG.

Lysine 95 acts as the Proton donor in catalysis.

Belongs to the OMP decarboxylase family. Type 2 subfamily.

The catalysed reaction is orotidine 5'-phosphate + H(+) = UMP + CO2. It functions in the pathway pyrimidine metabolism; UMP biosynthesis via de novo pathway; UMP from orotate: step 2/2. In Cupriavidus taiwanensis (strain DSM 17343 / BCRC 17206 / CCUG 44338 / CIP 107171 / LMG 19424 / R1) (Ralstonia taiwanensis (strain LMG 19424)), this protein is Orotidine 5'-phosphate decarboxylase.